A 96-amino-acid chain; its full sequence is Putative pterin-4-alpha-carbinolamine dehydratase (96 aa).

Belongs to the pterin-4-alpha-carbinolamine dehydratase family.

The catalysed reaction is (4aS,6R)-4a-hydroxy-L-erythro-5,6,7,8-tetrahydrobiopterin = (6R)-L-erythro-6,7-dihydrobiopterin + H2O. The protein is Putative pterin-4-alpha-carbinolamine dehydratase of Metallosphaera sedula (strain ATCC 51363 / DSM 5348 / JCM 9185 / NBRC 15509 / TH2).